Consider the following 215-residue polypeptide: Adenylate kinase (215 aa).

10–15 is an ATP binding site; that stretch reads GAGKGT. An NMP region spans residues 30 to 59; sequence STGDMLRAAVKAGSPLGLKVKGVMDSGGLV. AMP contacts are provided by residues Thr-31, Arg-36, 57–59, 85–88, and Gln-92; these read GLV and GFPR. Positions 122–159 are LID; sequence GRRVHAASGRVYHDLHNPPKVAGKDDETGEDLIQREDD. ATP-binding positions include Arg-123 and 132 to 133; that span reads VY. The AMP site is built by Arg-156 and Arg-167. Gly-201 contributes to the ATP binding site.

The protein belongs to the adenylate kinase family. As to quaternary structure, monomer.

The protein localises to the cytoplasm. It carries out the reaction AMP + ATP = 2 ADP. The protein operates within purine metabolism; AMP biosynthesis via salvage pathway; AMP from ADP: step 1/1. In terms of biological role, catalyzes the reversible transfer of the terminal phosphate group between ATP and AMP. Plays an important role in cellular energy homeostasis and in adenine nucleotide metabolism. The chain is Adenylate kinase from Azotobacter vinelandii (strain DJ / ATCC BAA-1303).